The following is a 435-amino-acid chain: 5-methylthioadenosine/S-adenosylhomocysteine deaminase (435 aa).

Positions 65 and 67 each coordinate Zn(2+). Residues Glu94, Arg150, and His189 each coordinate substrate. His216 contributes to the Zn(2+) binding site. 2 residues coordinate substrate: Glu219 and Asp304. Asp304 contacts Zn(2+).

Belongs to the metallo-dependent hydrolases superfamily. MTA/SAH deaminase family. It depends on Zn(2+) as a cofactor.

The enzyme catalyses S-adenosyl-L-homocysteine + H2O + H(+) = S-inosyl-L-homocysteine + NH4(+). It catalyses the reaction S-methyl-5'-thioadenosine + H2O + H(+) = S-methyl-5'-thioinosine + NH4(+). Catalyzes the deamination of 5-methylthioadenosine and S-adenosyl-L-homocysteine into 5-methylthioinosine and S-inosyl-L-homocysteine, respectively. Is also able to deaminate adenosine. In Bacillus cereus (strain AH187), this protein is 5-methylthioadenosine/S-adenosylhomocysteine deaminase.